The primary structure comprises 158 residues: Phosphopantetheine adenylyltransferase (158 aa).

A substrate-binding site is contributed by serine 9. ATP contacts are provided by residues serine 9–phenylalanine 10 and histidine 17. Substrate is bound by residues lysine 41, threonine 73, and arginine 87. Residues glycine 88 to arginine 90, glutamate 98, and asparagine 122 to serine 128 contribute to the ATP site.

Belongs to the bacterial CoaD family. As to quaternary structure, homohexamer. Mg(2+) serves as cofactor.

It is found in the cytoplasm. The catalysed reaction is (R)-4'-phosphopantetheine + ATP + H(+) = 3'-dephospho-CoA + diphosphate. The protein operates within cofactor biosynthesis; coenzyme A biosynthesis; CoA from (R)-pantothenate: step 4/5. Reversibly transfers an adenylyl group from ATP to 4'-phosphopantetheine, yielding dephospho-CoA (dPCoA) and pyrophosphate. The polypeptide is Phosphopantetheine adenylyltransferase (Leuconostoc citreum (strain KM20)).